Consider the following 403-residue polypeptide: FAD-dependent monooxygenase tazP (403 aa).

FAD contacts are provided by G75, R144, D354, and A367.

The protein belongs to the paxM FAD-dependent monooxygenase family. FAD is required as a cofactor.

The protein operates within secondary metabolite biosynthesis. Functionally, FAD-dependent monooxygenase; part of the gene cluster that mediates the biosynthesis of azaterrilone A and other azaphilones, a class of fungal metabolites characterized by a highly oxygenated pyrano-quinone bicyclic core and exhibiting a broad range of bioactivities. The first step of the pathway begins with the non-reducing polyketide synthase tazA that assembles one acetyl-CoA starter unit, five malonyl-CoA units, and catalyzes a series of Claisen condensations, methylation, PT-mediated cyclization, and finally releases the first hexaketide precursor through the R-domain. The tazA product then undergoes reduction on its terminal ketone and the following pyran-ring formation by yet undetermined enzyme(s). Dehydration and enoyl reduction, possibly involving the trans-enoyl reductase tazE leads to the next intermediate. TazD is predicted as an acetyltransferase and might catalyze the acetylation steps leading to the synthesis of azaterrilone A. Azaterrilone A is not the final product of the taz pathway and both the highly reducing polyketide synthase tazB and the dual enzyme tazHJ catalyze late steps of the pathway, leading to the production of the 2 final stereoisomers that contain additional polyketide modification whose structures have still to be determined. The protein is FAD-dependent monooxygenase tazP of Aspergillus terreus (strain NIH 2624 / FGSC A1156).